The primary structure comprises 1117 residues: Reverse gyrase (1117 aa).

The segment at 3 to 42 adopts an RG N-terminal-type zinc-finger fold; that stretch reads LATGAKYYHSCINCGGINTDTRNEKGLPCEVCLPFEDGDV. Zn(2+) is bound by residues cysteine 13, cysteine 16, cysteine 31, and cysteine 34. Residues glutamine 84 and 101 to 108 contribute to the ATP site; that span reads APTGVGKT. The Helicase ATP-binding domain maps to 88-284; that stretch reads AKRLLLSKSF…LFRELLGFEI (197 aa). Positions 206-209 match the DEAD box motif; sequence DDVD. The interval 551–1117 is topoisomerase I; it reads KDMKSRMIIV…EELNEILIKN (567 aa). The Toprim domain occupies 555–712; it reads SRMIIVESPT…NVQRIEMHEI (158 aa). Residue glutamate 561 participates in Mg(2+) binding. The RG C-terminal-type zinc finger occupies 631 to 658; that stretch reads IKRCSSCGAQFTDELPRCPYCNSDKIDD. Zn(2+) is bound by residues cysteine 634, cysteine 637, cysteine 648, and cysteine 651. Aspartate 681 is a binding site for Mg(2+). A Topo IA-type catalytic domain is found at 728 to 1114; that stretch reads DVNLVKSQIV…NLYEELNEIL (387 aa). The active-site O-(5'-phospho-DNA)-tyrosine intermediate is the tyrosine 864.

In the N-terminal section; belongs to the DEAD box helicase family. DDVD subfamily. The protein in the C-terminal section; belongs to the type IA topoisomerase family. As to quaternary structure, monomer. Zn(2+) serves as cofactor. Requires Mg(2+) as cofactor.

It localises to the cytoplasm. It carries out the reaction ATP + H2O = ADP + phosphate + H(+). Functionally, modifies the topological state of DNA by introducing positive supercoils in an ATP-dependent process, increasing the linking number in steps of +1; also positively supercoils with dATP and ATP-gamma-S. With UTP or dTTP relaxes negatively supercoiled DNA, in the absence of any nucleotide partially relaxes negative supercoils. In the absence of nucleotide has a higher affinity for dsDNA with a single-stranded tail than dsDNA or ssDNA. Has an ATPase activity in the absence of DNA. Binds to single-stranded DNA, transiently cleaves and then rejoins the ends, introducing a positive supercoil in the process. The scissile phosphodiester is attacked by the catalytic tyrosine of the enzyme, resulting in the formation of a DNA-(5'-phosphotyrosyl)-enzyme intermediate. Probably involved in rewinding DNA strands in regions of the chromosome that have opened up to allow replication, transcription, DNA repair and/or for DNA protection. The chain is Reverse gyrase from Caldanaerobacter subterraneus subsp. tengcongensis (strain DSM 15242 / JCM 11007 / NBRC 100824 / MB4) (Thermoanaerobacter tengcongensis).